Here is a 142-residue protein sequence, read N- to C-terminus: Large ribosomal subunit protein uL11 (142 aa).

The protein belongs to the universal ribosomal protein uL11 family. In terms of assembly, part of the ribosomal stalk of the 50S ribosomal subunit. Interacts with L10 and the large rRNA to form the base of the stalk. L10 forms an elongated spine to which L12 dimers bind in a sequential fashion forming a multimeric L10(L12)X complex. Post-translationally, one or more lysine residues are methylated.

In terms of biological role, forms part of the ribosomal stalk which helps the ribosome interact with GTP-bound translation factors. This is Large ribosomal subunit protein uL11 from Pseudoalteromonas translucida (strain TAC 125).